Here is a 79-residue protein sequence, read N- to C-terminus: Small ribosomal subunit protein bS16 (79 aa).

It belongs to the bacterial ribosomal protein bS16 family.

The chain is Small ribosomal subunit protein bS16 from Nitratidesulfovibrio vulgaris (strain ATCC 29579 / DSM 644 / CCUG 34227 / NCIMB 8303 / VKM B-1760 / Hildenborough) (Desulfovibrio vulgaris).